The primary structure comprises 189 residues: Phomopsin biosynthesis cluster protein C' (189 aa).

It belongs to the oryJ family.

Part of the gene cluster that mediates the biosynthesis of the phomopsins, a group of hexapeptide mycotoxins which infects lupins and causes lupinosis disease in livestock. The role of phomC' within the phomopsins biosynthesis pathway has still to be determined. The pathway starts with the processing of the precursor phomA by several endopeptidases including kexin proteases as well as the cluster-specific S41 family peptidase phomP1 and the oligopeptidase phomG to produce 10 identical copies of the hexapeptide Tyr-Val-Ile-Pro-Ile-Asp. After being excised from the precursor peptide, the core peptides are cyclized and modified post-translationally by enzymes encoded within the gene cluster. The timing and order of proteolysis of the phomA precursor and PTMs are still unknown. Two tyrosinase-like enzymes, phomQ1 and phomQ2, catalyze the chlorination and hydroxylation of Tyr, respectively. PhomYb, is proposed to be involved in the construction of the macrocyclic structure. The other 4 ustYa family proteins may be involved in PTMs that generate the unique structure of phomopsin A. PhomYa is required for the hydroxylation of C-beta of Tyr. PhomYc, phomYd, and phomYe are responsible for the biosynthesis of 2,3-dehydroisoleucine (dIle), 2,3-dehydroaspartic acid (dAsp), and 3,4-dehydroproline (dPro), respectively. While dIle formation by phomYc is indispensable for the installation of dAsp by phomYd, the order of the other PTMs have not been elucidated yet. Most of the biosynthetic enzymes likely have broad substrate specificity, and thus, there might be a metabolic grid from a precursor to phomopsin A. The enzyme(s) responsible for the biosynthesis of 3,4-dehydrovaline (dVal) have also not been identified yet. Finally, phomM acts as an S-adenosylmethionine-dependent alpha-N-methyltransferase that catalyzes two successive N-methylation reactions, converting N-desmethyl-phomopsin A to phomopsin A and phomopsin A further to an N,N-dimethylated congener called phomopsin E. This chain is Phomopsin biosynthesis cluster protein C', found in Diaporthe leptostromiformis (Lupinosis disease fungus).